A 462-amino-acid polypeptide reads, in one-letter code: L-seryl-tRNA(Sec) selenium transferase (462 aa).

N6-(pyridoxal phosphate)lysine is present on lysine 294.

This sequence belongs to the SelA family. In terms of assembly, homodecamer; pentamer of dimers. Binds only one seryl-tRNA(Sec) per dimer. The cofactor is pyridoxal 5'-phosphate.

Its subcellular location is the cytoplasm. The enzyme catalyses L-seryl-tRNA(Sec) + selenophosphate + H(+) = L-selenocysteinyl-tRNA(Sec) + phosphate. It functions in the pathway aminoacyl-tRNA biosynthesis; selenocysteinyl-tRNA(Sec) biosynthesis; selenocysteinyl-tRNA(Sec) from L-seryl-tRNA(Sec) (bacterial route): step 1/1. Its function is as follows. Converts seryl-tRNA(Sec) to selenocysteinyl-tRNA(Sec) required for selenoprotein biosynthesis. This Yersinia enterocolitica serotype O:8 / biotype 1B (strain NCTC 13174 / 8081) protein is L-seryl-tRNA(Sec) selenium transferase.